The sequence spans 329 residues: Cathepsin K (329 aa).

Residues 1 to 15 form the signal peptide; sequence MWGLTVLLLPVVSFA. The propeptide at 16–114 is activation peptide; the sequence is LYPEEILDTQ…TLYIPDWEGR (99 aa). Residue Asn103 is glycosylated (N-linked (GlcNAc...) asparagine). 3 disulfides stabilise this stretch: Cys136–Cys177, Cys170–Cys210, and Cys269–Cys318. The active site involves Cys139. Catalysis depends on residues His276 and Asn296.

Belongs to the peptidase C1 family.

The protein resides in the lysosome. The protein localises to the secreted. It localises to the apical cell membrane. It carries out the reaction Broad proteolytic activity. With small-molecule substrates and inhibitors, the major determinant of specificity is P2, which is preferably Leu, Met &gt; Phe, and not Arg.. Functionally, thiol protease involved in osteoclastic bone resorption and may participate partially in the disorder of bone remodeling. Displays potent endoprotease activity against fibrinogen at acid pH. May play an important role in extracellular matrix degradation. Involved in the release of thyroid hormone thyroxine (T4) by limited proteolysis of TG/thyroglobulin in the thyroid follicle lumen. This chain is Cathepsin K (CTSK), found in Bos taurus (Bovine).